Consider the following 153-residue polypeptide: Large ribosomal subunit protein uL15 (153 aa).

Residues methionine 1–glutamate 40 are compositionally biased toward basic residues. Positions methionine 1 to arginine 60 are disordered. Residues glutamine 41–arginine 60 are compositionally biased toward basic and acidic residues.

Belongs to the universal ribosomal protein uL15 family. In terms of assembly, part of the 50S ribosomal subunit.

Functionally, binds to the 23S rRNA. This Halobacterium salinarum (strain ATCC 29341 / DSM 671 / R1) protein is Large ribosomal subunit protein uL15.